A 232-amino-acid chain; its full sequence is Chromosome partition protein MukE (232 aa).

The disordered stretch occupies residues 203–232 (HTKEPSQGSLLSEEDQEEQAQEEMTEEGEA). A compositionally biased stretch (acidic residues) spans 214–232 (SEEDQEEQAQEEMTEEGEA).

This sequence belongs to the MukE family. As to quaternary structure, interacts, and probably forms a ternary complex, with MukF and MukB. The complex formation is stimulated by calcium or magnesium.

The protein localises to the cytoplasm. The protein resides in the nucleoid. Functionally, involved in chromosome condensation, segregation and cell cycle progression. May participate in facilitating chromosome segregation by condensation DNA from both sides of a centrally located replisome during cell division. Probably acts via its interaction with MukB and MukF. This is Chromosome partition protein MukE from Vibrio parahaemolyticus serotype O3:K6 (strain RIMD 2210633).